A 311-amino-acid polypeptide reads, in one-letter code: Methionyl-tRNA formyltransferase (311 aa).

108-111 (SILP) lines the (6S)-5,6,7,8-tetrahydrofolate pocket.

This sequence belongs to the Fmt family.

It catalyses the reaction L-methionyl-tRNA(fMet) + (6R)-10-formyltetrahydrofolate = N-formyl-L-methionyl-tRNA(fMet) + (6S)-5,6,7,8-tetrahydrofolate + H(+). Attaches a formyl group to the free amino group of methionyl-tRNA(fMet). The formyl group appears to play a dual role in the initiator identity of N-formylmethionyl-tRNA by promoting its recognition by IF2 and preventing the misappropriation of this tRNA by the elongation apparatus. The sequence is that of Methionyl-tRNA formyltransferase from Sorangium cellulosum (strain So ce56) (Polyangium cellulosum (strain So ce56)).